Here is a 468-residue protein sequence, read N- to C-terminus: 3-isopropylmalate dehydratase large subunit (468 aa).

[4Fe-4S] cluster contacts are provided by cysteine 349, cysteine 409, and cysteine 412.

Belongs to the aconitase/IPM isomerase family. LeuC type 1 subfamily. As to quaternary structure, heterodimer of LeuC and LeuD. [4Fe-4S] cluster serves as cofactor.

The catalysed reaction is (2R,3S)-3-isopropylmalate = (2S)-2-isopropylmalate. It participates in amino-acid biosynthesis; L-leucine biosynthesis; L-leucine from 3-methyl-2-oxobutanoate: step 2/4. Its function is as follows. Catalyzes the isomerization between 2-isopropylmalate and 3-isopropylmalate, via the formation of 2-isopropylmaleate. In Nitrobacter winogradskyi (strain ATCC 25391 / DSM 10237 / CIP 104748 / NCIMB 11846 / Nb-255), this protein is 3-isopropylmalate dehydratase large subunit.